The chain runs to 492 residues: MAFPPNSWRPTGPLPTSSLSLRWRVMMLAMSMVALVVVLMAVAVYAVVSRALYDDLDNQLHSRARLLIESGSLAADPGKAIEGTAYSDVNAMLVIPGRSIYTANQQGQTLPLGEPEKDVISGELLMSLRTANHQRVLAVHLANGSSLLISKSLAPTVQVLRRLGTVLLIVGGIGVAVAAIAGGAVARAGLRPVGRLTEAAERVARTDDLRPIPVVGSDELARLTEAFNMMLRALAESRERQARLVSDAGHELRTPLTSLRTNVELLMAAQEPGAPPLPEDEMAGLRADVIAQIEELSTLVGDLVDLTREDAGGITPEPVDMADVIDRSLERVRRRRNDIEFDVDVIGWQVFGDAQGLGRAVLNLLDNAAKWSPPGGRVGVRLHQVDHMHAEIVVSDQGPGIPPEERRLVFERFYRSDAARAMPGSGLGLAIVQQVVLKHGGALRIDETVPGGNPPGASVHMLLPGQRIPDPGATRSAEGFVDDRGGHTVATE.

At 1–27 (MAFPPNSWRPTGPLPTSSLSLRWRVMM) the chain is on the cytoplasmic side. The helical transmembrane segment at 28-48 (LAMSMVALVVVLMAVAVYAVV) threads the bilayer. Over 49 to 165 (SRALYDDLDN…TVQVLRRLGT (117 aa)) the chain is Extracellular. A helical membrane pass occupies residues 166-186 (VLLIVGGIGVAVAAIAGGAVA). Positions 187–239 (RAGLRPVGRLTEAAERVARTDDLRPIPVVGSDELARLTEAFNMMLRALAESRE) constitute an HAMP domain. Residues 187 to 492 (RAGLRPVGRL…DRGGHTVATE (306 aa)) are Cytoplasmic-facing. In terms of domain architecture, Histidine kinase spans 247-467 (DAGHELRTPL…SVHMLLPGQR (221 aa)). Position 250 is a phosphohistidine; by autocatalysis (histidine 250). Positions 470–492 (DPGATRSAEGFVDDRGGHTVATE) are disordered.

It depends on Mg(2+) as a cofactor. Mn(2+) is required as a cofactor. Post-translationally, autophosphorylated.

It is found in the cell membrane. The catalysed reaction is ATP + protein L-histidine = ADP + protein N-phospho-L-histidine.. Member of the two-component regulatory system MprB/MprA which contributes to maintaining a balance among several systems involved in stress resistance and is required for establishment and maintenance of persistent infection in the host. In response to environmental signals MprB acts both as a membrane-associated protein kinase that undergoes autophosphorylation and subsequently transfers the phosphate to MprA, and a protein phosphatase that dephosphorylates phospho-MprA. This Mycolicibacterium smegmatis (strain ATCC 700084 / mc(2)155) (Mycobacterium smegmatis) protein is Signal transduction histidine-protein kinase/phosphatase MprB (mprB).